The chain runs to 403 residues: GTPase Obg (403 aa).

In terms of domain architecture, Obg spans Met1–Leu159. An OBG-type G domain is found at Ala160 to Ile333. Residues Gly166–Ser173, Phe191–Val195, Asp213–Gly216, Asn283–Asp286, and Ser314–Ala316 each bind GTP. The Mg(2+) site is built by Ser173 and Thr193. A disordered region spans residues Glu363–Pro403. Residues Gln365–Ile397 show a composition bias toward acidic residues.

It belongs to the TRAFAC class OBG-HflX-like GTPase superfamily. OBG GTPase family. As to quaternary structure, monomer. The cofactor is Mg(2+).

The protein localises to the cytoplasm. In terms of biological role, an essential GTPase which binds GTP, GDP and possibly (p)ppGpp with moderate affinity, with high nucleotide exchange rates and a fairly low GTP hydrolysis rate. Plays a role in control of the cell cycle, stress response, ribosome biogenesis and in those bacteria that undergo differentiation, in morphogenesis control. The sequence is that of GTPase Obg from Haemophilus influenzae (strain PittEE).